The sequence spans 139 residues: Putative translationally-controlled tumor protein-like protein TPT1P8 (139 aa).

The region spanning 1–139 (MIIFQDLISH…KTTSSLLVKT (139 aa)) is the TCTP domain. Residues 40-51 (TGNTDDSLIGRN) show a composition bias toward polar residues. Residues 40 to 60 (TGNTDDSLIGRNSSSESTEDE) form a disordered region.

Belongs to the TCTP family.

The chain is Putative translationally-controlled tumor protein-like protein TPT1P8 (TPT1P8) from Homo sapiens (Human).